The following is a 164-amino-acid chain: Transcriptional regulator MraZ (164 aa).

SpoVT-AbrB domains are found at residues 7–57 and 86–129; these read THQN…TVGA and AYPL…NPEA. The tract at residues 133–164 is disordered; it reads RRQAARSRARTLATSRRPASAPAAGNTAGAAE. A compositionally biased stretch (low complexity) spans 142–164; that stretch reads RTLATSRRPASAPAAGNTAGAAE.

It belongs to the MraZ family. Forms oligomers.

The protein localises to the cytoplasm. The protein resides in the nucleoid. This Gluconobacter oxydans (strain 621H) (Gluconobacter suboxydans) protein is Transcriptional regulator MraZ.